The following is a 30-amino-acid chain: Photosystem I reaction center subunit XII (30 aa).

The helical transmembrane segment at 7–29 threads the bilayer; sequence VYTVLLIALLASVLAIRLGSTLY.

The protein belongs to the PsaM family.

Its subcellular location is the plastid. It is found in the chloroplast thylakoid membrane. The sequence is that of Photosystem I reaction center subunit XII from Trieres chinensis (Marine centric diatom).